A 184-amino-acid chain; its full sequence is Transposon Tn917 resolvase (184 aa).

Positions 1 to 134 constitute a Resolvase/invertase-type recombinase catalytic domain; sequence MIFGYARVST…SGLKAARVRG (134 aa). Catalysis depends on Ser9, which acts as the O-(5'-phospho-DNA)-serine intermediate. A DNA-binding region (H-T-H motif) is located at residues 161–180; it reads IRQILDASKLSKTTFYRYLN.

This sequence belongs to the site-specific recombinase resolvase family.

Functionally, resolvase catalyzes the resolution (a site-specific recombination) of the cointegrated replicon to yield the final transposition products. The chain is Transposon Tn917 resolvase (tnpR) from Enterococcus faecalis (Streptococcus faecalis).